Reading from the N-terminus, the 59-residue chain is MNFAKVFVLVAMAVLLLVGQSEAGGLKKLGKKLEGAGKRVFNAAEKALPVVAGAKALGK.

An N-terminal signal peptide occupies residues 1–23 (MNFAKVFVLVAMAVLLLVGQSEA).

It belongs to the cecropin family.

Its subcellular location is the secreted. Its function is as follows. Cecropins have lytic and antibacterial activity against several Gram-positive and Gram-negative bacteria. In Aedes albopictus (Asian tiger mosquito), this protein is Cecropin-C type 2 (CECC2).